The following is a 179-amino-acid chain: Large ribosomal subunit protein uL5 (179 aa).

The protein belongs to the universal ribosomal protein uL5 family. As to quaternary structure, part of the 50S ribosomal subunit; part of the 5S rRNA/L5/L18/L25 subcomplex. Contacts the 5S rRNA and the P site tRNA. Forms a bridge to the 30S subunit in the 70S ribosome.

This is one of the proteins that bind and probably mediate the attachment of the 5S RNA into the large ribosomal subunit, where it forms part of the central protuberance. In the 70S ribosome it contacts protein S13 of the 30S subunit (bridge B1b), connecting the 2 subunits; this bridge is implicated in subunit movement. Contacts the P site tRNA; the 5S rRNA and some of its associated proteins might help stabilize positioning of ribosome-bound tRNAs. The chain is Large ribosomal subunit protein uL5 from Exiguobacterium sp. (strain ATCC BAA-1283 / AT1b).